The sequence spans 502 residues: 1-aminocyclopropane-1-carboxylate synthase-like protein 1 (502 aa).

Residues Met1–Met24 form a disordered region. Glu106 is a substrate binding site. Lys324 carries the post-translational modification N6-(pyridoxal phosphate)lysine.

The protein belongs to the class-I pyridoxal-phosphate-dependent aminotransferase family.

In terms of biological role, does not catalyze the synthesis of 1-aminocyclopropane-1-carboxylate but is capable of catalyzing the deamination of L-vinylglycine. This chain is 1-aminocyclopropane-1-carboxylate synthase-like protein 1 (Accs), found in Mus musculus (Mouse).